Reading from the N-terminus, the 338-residue chain is Solute carrier family 35 member G3 (338 aa).

The disordered stretch occupies residues 1–24 (MAGSHPYFNQPDSTHPSPPSAPPS). 9 helical membrane passes run 37–57 (TSGLLVALLGGGLPAGFVGPL), 67–87 (LPSLELLIWRCLFHLPIALLL), 105–125 (FFCALLNILSIGCAYSAVQVV), 160–180 (CGLLGCILGLIIIVGPGLWTL), 190–210 (ALGYAEAFLGGRALSLGLLVY), 221–241 (TVAFLSGLVGLLGSVPGLFVL), 250–270 (LLSWSCVGAVGILALVSFTCV), 281–301 (LVCAVLHSEVVVALILQYYML), and 305–325 (VAPSDIMGAGVALGSIAIITA). In terms of domain architecture, EamA 1 spans 49 to 174 (LPAGFVGPLS…CILGLIIIVG (126 aa)). Residues 272–325 (YAVTKAHPALVCAVLHSEVVVALILQYYMLHETVAPSDIMGAGVALGSIAIITA) enclose the EamA 2 domain.

Belongs to the SLC35G solute transporter family.

The protein localises to the membrane. The sequence is that of Solute carrier family 35 member G3 (SLC35G3) from Pan paniscus (Pygmy chimpanzee).